The following is a 462-amino-acid chain: Squalene synthase ERG9 (462 aa).

Residues 406–426 (AVVLFGVVIAALVCISGLMLG) form a helical membrane-spanning segment.

This sequence belongs to the phytoene/squalene synthase family. Mg(2+) serves as cofactor.

Its subcellular location is the endoplasmic reticulum membrane. It is found in the microsome. It catalyses the reaction 2 (2E,6E)-farnesyl diphosphate + NADPH + H(+) = squalene + 2 diphosphate + NADP(+). The enzyme catalyses 2 (2E,6E)-farnesyl diphosphate + NADH + H(+) = squalene + 2 diphosphate + NAD(+). Its pathway is terpene metabolism; lanosterol biosynthesis; lanosterol from farnesyl diphosphate: step 1/3. It participates in steroid metabolism; ergosterol biosynthesis. In terms of biological role, squalene synthase; part of the third module of ergosterol biosynthesis pathway that includes the late steps of the pathway. ERG9 produces squalene from 2 farnesyl pyrophosphate moieties. The third module or late pathway involves the ergosterol synthesis itself through consecutive reactions that mainly occur in the endoplasmic reticulum (ER) membrane. Firstly, the squalene synthase ERG9 catalyzes the condensation of 2 farnesyl pyrophosphate moieties to form squalene, which is the precursor of all steroids. Squalene synthase is crucial for balancing the incorporation of farnesyl diphosphate (FPP) into sterol and nonsterol isoprene synthesis. Secondly, squalene is converted into lanosterol by the consecutive action of the squalene epoxidase ERG1 and the lanosterol synthase ERG7. Then, the delta(24)-sterol C-methyltransferase ERG6 methylates lanosterol at C-24 to produce eburicol. Eburicol is the substrate of the sterol 14-alpha demethylase encoded by CYP51A, CYP51B and CYP51C, to yield 4,4,24-trimethyl ergosta-8,14,24(28)-trienol. CYP51B encodes the enzyme primarily responsible for sterol 14-alpha-demethylation, and plays an essential role in ascospore formation. CYP51A encodes an additional sterol 14-alpha-demethylase, induced on ergosterol depletion and responsible for the intrinsic variation in azole sensitivity. The third CYP51 isoform, CYP51C, does not encode a sterol 14-alpha-demethylase, but is required for full virulence on host wheat ears. The C-14 reductase ERG24 then reduces the C14=C15 double bond which leads to 4,4-dimethylfecosterol. A sequence of further demethylations at C-4, involving the C-4 demethylation complex containing the C-4 methylsterol oxidases ERG25, the sterol-4-alpha-carboxylate 3-dehydrogenase ERG26 and the 3-keto-steroid reductase ERG27, leads to the production of fecosterol via 4-methylfecosterol. ERG28 has a role as a scaffold to help anchor ERG25, ERG26 and ERG27 to the endoplasmic reticulum. The C-8 sterol isomerase ERG2 then catalyzes the reaction which results in unsaturation at C-7 in the B ring of sterols and thus converts fecosterol to episterol. The sterol-C5-desaturases ERG3A and ERG3BB then catalyze the introduction of a C-5 double bond in the B ring to produce 5-dehydroepisterol. The C-22 sterol desaturases ERG5A and ERG5B further convert 5-dehydroepisterol into ergosta-5,7,22,24(28)-tetraen-3beta-ol by forming the C-22(23) double bond in the sterol side chain. Finally, ergosta-5,7,22,24(28)-tetraen-3beta-ol is substrate of the C-24(28) sterol reductase ERG4 to produce ergosterol. The polypeptide is Squalene synthase ERG9 (Gibberella zeae (strain ATCC MYA-4620 / CBS 123657 / FGSC 9075 / NRRL 31084 / PH-1) (Wheat head blight fungus)).